Here is a 341-residue protein sequence, read N- to C-terminus: Calcium-binding protein 39 (341 aa).

The protein belongs to the Mo25 family. Component of a trimeric complex composed of STK11/LKB1, STRAD (STRADA or STRADB) and CAB39/MO25 (CAB39/MO25alpha or CAB39L/MO25beta): the complex tethers STK11/LKB1 in the cytoplasm and stimulates its catalytic activity.

The protein localises to the cytoplasm. Component of a complex that binds and activates STK11/LKB1. In the complex, required to stabilize the interaction between CAB39/MO25 (CAB39/MO25alpha or CAB39L/MO25beta) and STK11/LKB1. The chain is Calcium-binding protein 39 (CAB39) from Bos taurus (Bovine).